Here is a 449-residue protein sequence, read N- to C-terminus: 23S rRNA (uracil(1939)-C(5))-methyltransferase RlmD (449 aa).

The TRAM domain occupies 1-66 (MGRSRHHNKL…AKFDEAKVVE (66 aa)). 4 residues coordinate [4Fe-4S] cluster: Cys79, Cys85, Cys88, and Cys169. S-adenosyl-L-methionine-binding residues include Gln280, Phe309, Asn314, Glu330, Asn357, and Asp379. Residue Cys405 is the Nucleophile of the active site.

Belongs to the class I-like SAM-binding methyltransferase superfamily. RNA M5U methyltransferase family. RlmD subfamily.

It carries out the reaction uridine(1939) in 23S rRNA + S-adenosyl-L-methionine = 5-methyluridine(1939) in 23S rRNA + S-adenosyl-L-homocysteine + H(+). Its function is as follows. Catalyzes the formation of 5-methyl-uridine at position 1939 (m5U1939) in 23S rRNA. This Francisella tularensis subsp. novicida (strain U112) protein is 23S rRNA (uracil(1939)-C(5))-methyltransferase RlmD.